The sequence spans 342 residues: N-acetyl-gamma-glutamyl-phosphate reductase (342 aa).

Cysteine 149 is a catalytic residue.

The protein belongs to the NAGSA dehydrogenase family. Type 1 subfamily.

The protein localises to the cytoplasm. The catalysed reaction is N-acetyl-L-glutamate 5-semialdehyde + phosphate + NADP(+) = N-acetyl-L-glutamyl 5-phosphate + NADPH + H(+). It participates in amino-acid biosynthesis; L-arginine biosynthesis; N(2)-acetyl-L-ornithine from L-glutamate: step 3/4. In terms of biological role, catalyzes the NADPH-dependent reduction of N-acetyl-5-glutamyl phosphate to yield N-acetyl-L-glutamate 5-semialdehyde. This Nitrosomonas eutropha (strain DSM 101675 / C91 / Nm57) protein is N-acetyl-gamma-glutamyl-phosphate reductase.